Here is a 921-residue protein sequence, read N- to C-terminus: Phototropin-1A (921 aa).

Positions 1 to 11 are enriched in gly residues; that stretch reads MASKGTEGGHG. Disordered stretches follow at residues 1-59 and 88-118; these read MASK…SPFL and TGLP…QSAA. Positions 40–51 are enriched in low complexity; sequence SSASSFRTAAAA. A compositionally biased stretch (polar residues) spans 97–117; it reads RPSSGSARTSSEDNPQQQQSA. A PAS 1 domain is found at 123 to 197; the sequence is VSEELRAALS…KIRQSLANGS (75 aa). Residues 172 to 177, arginine 190, asparagine 205, asparagine 215, and glutamine 236 each bind FMN; that span reads NCRFLQ. The residue at position 173 (cysteine 173) is an S-4a-FMN cysteine. The PAC 1 domain occupies 197–251; the sequence is SNYCGRILNYKKDGTPFWNLLTIAPIKDEDGRLLKFIGMQVEVSKYTEGKKDTVV. The segment covering 286–295 has biased composition (polar residues); the sequence is RSLSESSNNT. Disordered stretches follow at residues 286–347 and 364–390; these read RSLS…NRTR and SVEK…ESFE. Composition is skewed to basic and acidic residues over residues 312-321 and 364-376; these read PSKRSSESGS and SVEK…RDED. The PAS 2 domain maps to 400–473; sequence RGIDLATTLE…RKIRDAIDNQ (74 aa). Residues 449 to 454, arginine 467, asparagine 482, asparagine 492, and glutamine 513 each bind FMN; that span reads NCRFLQ. Residue cysteine 450 is modified to S-4a-FMN cysteine. The region spanning 474 to 528 is the PAC 2 domain; that stretch reads AEVTVQLINYTKSGKKFWNLFHLQPMRDQKGDVQYFIGVQLDGTEHVQDDAAKEG. In terms of domain architecture, Protein kinase spans 594-881; the sequence is FRPVKPLGSG…ANEIKGHPFF (288 aa). Residues 600–608 and lysine 623 each bind ATP; that span reads LGSGDTGSV. Aspartate 719 functions as the Proton acceptor in the catalytic mechanism.

It belongs to the protein kinase superfamily. Ser/Thr protein kinase family. As to quaternary structure, homodimer. The cofactor is FMN. In terms of processing, autophosphorylated in response to blue light irradiation. 2 molecules of FMN bind covalently to cysteines after exposure to blue light and are reversed in the dark. In terms of tissue distribution, highly expressed in coleoptiles of dark-grown seedlings.

It carries out the reaction L-seryl-[protein] + ATP = O-phospho-L-seryl-[protein] + ADP + H(+). The enzyme catalyses L-threonyl-[protein] + ATP = O-phospho-L-threonyl-[protein] + ADP + H(+). Functionally, protein kinase that acts as a blue light photoreceptor in a signal-transduction pathway for phototropic responses. Regulates a wide range of physiological activities in plants that maximize the efficiency of photosynthesis, such as chloroplast relocations, stomata opening, and leaf expansion. The chain is Phototropin-1A (PHOT1A) from Oryza sativa subsp. japonica (Rice).